A 226-amino-acid chain; its full sequence is ATP-dependent dethiobiotin synthetase BioD (226 aa).

Residue 12 to 17 coordinates ATP; that stretch reads GVGKTV. Residue T16 participates in Mg(2+) binding. Residue K37 is part of the active site. T41 serves as a coordination point for substrate. ATP contacts are provided by residues D49, 108 to 111, 169 to 170, and 197 to 199; these read EGAG, GS, and PAG. Mg(2+) is bound by residues D49 and E108.

It belongs to the dethiobiotin synthetase family. Homodimer. It depends on Mg(2+) as a cofactor.

It is found in the cytoplasm. It catalyses the reaction (7R,8S)-7,8-diammoniononanoate + CO2 + ATP = (4R,5S)-dethiobiotin + ADP + phosphate + 3 H(+). It participates in cofactor biosynthesis; biotin biosynthesis; biotin from 7,8-diaminononanoate: step 1/2. Functionally, catalyzes a mechanistically unusual reaction, the ATP-dependent insertion of CO2 between the N7 and N8 nitrogen atoms of 7,8-diaminopelargonic acid (DAPA, also called 7,8-diammoniononanoate) to form a ureido ring. In Mycobacterium bovis (strain BCG / Pasteur 1173P2), this protein is ATP-dependent dethiobiotin synthetase BioD.